The primary structure comprises 50 residues: Protein PsbN (50 aa).

The chain crosses the membrane as a helical span at residues 14-34 (IAVTILALLLALTGFGLWTAF).

It belongs to the PsbN family.

Its subcellular location is the cellular thylakoid membrane. Functionally, may play a role in photosystem I and II biogenesis. The sequence is that of Protein PsbN from Prochlorococcus marinus (strain MIT 9301).